A 252-amino-acid chain; its full sequence is Trans-aconitate 2-methyltransferase (252 aa).

The protein belongs to the methyltransferase superfamily. Tam family.

It localises to the cytoplasm. The catalysed reaction is trans-aconitate + S-adenosyl-L-methionine = (E)-3-(methoxycarbonyl)pent-2-enedioate + S-adenosyl-L-homocysteine. In terms of biological role, catalyzes the S-adenosylmethionine monomethyl esterification of trans-aconitate. The protein is Trans-aconitate 2-methyltransferase of Shigella flexneri serotype 5b (strain 8401).